The following is a 364-amino-acid chain: Putative serine/threonine-protein phosphatase C06A1.3 (364 aa).

Residues 1–24 (MSTDGNNNKKGSKEGPKSSEISKF) form a disordered region. Basic and acidic residues predominate over residues 11-24 (GSKEGPKSSEISKF). 4 residues coordinate Mn(2+): aspartate 93, histidine 95, aspartate 121, and asparagine 153. Residue histidine 154 is the Proton donor of the active site. Residues histidine 202 and histidine 277 each contribute to the Mn(2+) site.

This sequence belongs to the PPP phosphatase family. PP-1 subfamily. The cofactor is Mn(2+).

It catalyses the reaction O-phospho-L-seryl-[protein] + H2O = L-seryl-[protein] + phosphate. The enzyme catalyses O-phospho-L-threonyl-[protein] + H2O = L-threonyl-[protein] + phosphate. The sequence is that of Putative serine/threonine-protein phosphatase C06A1.3 from Caenorhabditis elegans.